A 233-amino-acid polypeptide reads, in one-letter code: Large ribosomal subunit protein uL1 (233 aa).

The protein belongs to the universal ribosomal protein uL1 family. In terms of assembly, part of the 50S ribosomal subunit.

Its function is as follows. Binds directly to 23S rRNA. The L1 stalk is quite mobile in the ribosome, and is involved in E site tRNA release. Functionally, protein L1 is also a translational repressor protein, it controls the translation of the L11 operon by binding to its mRNA. This chain is Large ribosomal subunit protein uL1, found in Vibrio cholerae serotype O1 (strain ATCC 39315 / El Tor Inaba N16961).